We begin with the raw amino-acid sequence, 338 residues long: uncharacterized protein (338 aa).

Residues 1 to 20 (MYNNNQNHHNNDNNMNKDEP) form a disordered region. Residues 9–20 (HNNDNNMNKDEP) show a composition bias toward basic and acidic residues. N-linked (GlcNAc...) asparagine glycosylation is found at asparagine 37, asparagine 83, asparagine 97, asparagine 105, asparagine 114, and asparagine 122. The disordered stretch occupies residues 55–92 (VNSGNNNNNNNNNNNNNNNNNNNNNNNNNDSIVINMDT). Low complexity predominate over residues 59–92 (NNNNNNNNNNNNNNNNNNNNNNNNNDSIVINMDT). 3 helical membrane passes run 148–168 (YKKFISSLSYITFIGAAIVLI), 178–198 (FHAYQSFYISMGVIGFQFLLI), and 202–222 (ILSIILWSLYLLFTIFMFLKV). Asparagine 229, asparagine 240, asparagine 286, asparagine 302, asparagine 317, and asparagine 322 each carry an N-linked (GlcNAc...) asparagine glycan. Disordered stretches follow at residues 279 to 303 (SNLNRNNNNSNNVNNNGHQRINSNS) and 316 to 338 (LNSSGSNSSIYSDVQNDIGTNEE). Positions 280–294 (NLNRNNNNSNNVNNN) are enriched in low complexity. A compositionally biased stretch (low complexity) spans 316–327 (LNSSGSNSSIYS). Polar residues predominate over residues 328-338 (DVQNDIGTNEE).

It localises to the membrane. This is an uncharacterized protein from Dictyostelium discoideum (Social amoeba).